Here is a 552-residue protein sequence, read N- to C-terminus: Probable beta-glucosidase btgE (552 aa).

A signal peptide spans 1-18; that stretch reads MRGAILATAAALAGTAMA. Residues 250-291 form a disordered region; that stretch reads EPTSAPAAPSTTAVPATTTAAVPSTSSAAPSSSSTAPASTGA. Residues 251 to 289 are compositionally biased toward low complexity; the sequence is PTSAPAAPSTTAVPATTTAAVPSTSSAAPSSSSTAPAST. Glutamate 392 serves as the catalytic Proton donor. Residue glutamate 488 is the Nucleophile of the active site.

Belongs to the glycosyl hydrolase 17 family.

It localises to the secreted. Its subcellular location is the cell wall. It carries out the reaction Hydrolysis of terminal, non-reducing beta-D-glucosyl residues with release of beta-D-glucose.. The protein operates within glycan metabolism; cellulose degradation. In terms of biological role, beta-glucosidases are one of a number of cellulolytic enzymes involved in the degradation of cellulosic biomass. Catalyzes the last step releasing glucose from the inhibitory cellobiose. The protein is Probable beta-glucosidase btgE (btgE) of Neosartorya fischeri (strain ATCC 1020 / DSM 3700 / CBS 544.65 / FGSC A1164 / JCM 1740 / NRRL 181 / WB 181) (Aspergillus fischerianus).